The chain runs to 62 residues: Venom peptide SjAPI-2 (62 aa).

5 cysteine pairs are disulfide-bonded: C4/C40, C14/C36, C18/C32, C22/C60, and C42/C54. Residues C4–C60 enclose the TIL domain.

This sequence belongs to the serine protease inhibitor-like (TIL domain-containing) family. Expressed by the venom gland.

Its subcellular location is the secreted. Serine protease inhibitor. The protein is Venom peptide SjAPI-2 of Scorpiops jendeki (Scorpion).